Reading from the N-terminus, the 247-residue chain is Probable phosphatase swp_1620 (247 aa).

Zn(2+)-binding residues include histidine 8, histidine 10, histidine 16, histidine 41, glutamate 74, histidine 102, histidine 132, aspartate 193, and histidine 195.

Belongs to the PHP family. Requires Zn(2+) as cofactor.

The sequence is that of Probable phosphatase swp_1620 from Shewanella piezotolerans (strain WP3 / JCM 13877).